The sequence spans 449 residues: tRNA (guanine(37)-N(1))-methyltransferase (449 aa).

S-adenosyl-L-methionine contacts are provided by residues His-216, 254-255 (DL), 282-283 (DG), and Asn-345.

The protein belongs to the class I-like SAM-binding methyltransferase superfamily. TRM5/TYW2 family. Monomer.

The protein resides in the mitochondrion matrix. It localises to the nucleus. Its subcellular location is the cytoplasm. The enzyme catalyses guanosine(37) in tRNA + S-adenosyl-L-methionine = N(1)-methylguanosine(37) in tRNA + S-adenosyl-L-homocysteine + H(+). In terms of biological role, specifically methylates the N1 position of guanosine-37 in various cytoplasmic and mitochondrial tRNAs. Methylation is not dependent on the nature of the nucleoside 5' of the target nucleoside. This is the first step in the biosynthesis of wybutosine (yW), a modified base adjacent to the anticodon of tRNAs and required for accurate decoding. This chain is tRNA (guanine(37)-N(1))-methyltransferase, found in Candida albicans (strain WO-1) (Yeast).